Reading from the N-terminus, the 187-residue chain is Protein GrpE (187 aa).

The tract at residues Met1–Glu23 is disordered. Positions Leu7 to Glu23 are enriched in low complexity.

The protein belongs to the GrpE family. In terms of assembly, homodimer.

The protein resides in the cytoplasm. Participates actively in the response to hyperosmotic and heat shock by preventing the aggregation of stress-denatured proteins, in association with DnaK and GrpE. It is the nucleotide exchange factor for DnaK and may function as a thermosensor. Unfolded proteins bind initially to DnaJ; upon interaction with the DnaJ-bound protein, DnaK hydrolyzes its bound ATP, resulting in the formation of a stable complex. GrpE releases ADP from DnaK; ATP binding to DnaK triggers the release of the substrate protein, thus completing the reaction cycle. Several rounds of ATP-dependent interactions between DnaJ, DnaK and GrpE are required for fully efficient folding. The protein is Protein GrpE of Pseudomonas savastanoi pv. phaseolicola (strain 1448A / Race 6) (Pseudomonas syringae pv. phaseolicola (strain 1448A / Race 6)).